An 82-amino-acid polypeptide reads, in one-letter code: Putative membrane protein insertion efficiency factor (82 aa).

This sequence belongs to the UPF0161 family.

It is found in the cell inner membrane. Functionally, could be involved in insertion of integral membrane proteins into the membrane. This Aeromonas salmonicida (strain A449) protein is Putative membrane protein insertion efficiency factor.